Consider the following 246-residue polypeptide: Ribonuclease 3 (246 aa).

Positions 20 to 145 (FSKLEKILGF…FVGAIYLDRG (126 aa)) constitute an RNase III domain. E62 is a binding site for Mg(2+). D66 is an active-site residue. N131 and E134 together coordinate Mg(2+). The active site involves E134. Residues 173–241 (SYKSLLIEWC…SKRGYFVFQS (69 aa)) form the DRBM domain.

This sequence belongs to the ribonuclease III family. As to quaternary structure, homodimer. Mg(2+) is required as a cofactor.

It is found in the cytoplasm. The catalysed reaction is Endonucleolytic cleavage to 5'-phosphomonoester.. Its function is as follows. Digests double-stranded RNA. Involved in the processing of primary rRNA transcript to yield the immediate precursors to the large and small rRNAs (23S and 16S). Processes some mRNAs, and tRNAs when they are encoded in the rRNA operon. Processes pre-crRNA and tracrRNA of type II CRISPR loci if present in the organism. The protein is Ribonuclease 3 of Flavobacterium psychrophilum (strain ATCC 49511 / DSM 21280 / CIP 103535 / JIP02/86).